The primary structure comprises 172 residues: Cold-inducible RNA-binding protein (172 aa).

The 79-residue stretch at 6–84 (GKLFVGGLSF…RQIRVDQAGK (79 aa)) folds into the RRM domain. The interval 70–172 (KSVDGRQIRV…SYDSYATHNE (103 aa)) is disordered. 2 stretches are compositionally biased toward gly residues: residues 93-105 (YRGGSAGGRGFFR) and 114-137 (FSRGGGDRGYGGGRFESRSGGYGG). Phosphoserine is present on residues Ser-130, Ser-138, Ser-146, Ser-156, Ser-159, and Ser-163. Low complexity predominate over residues 138–172 (SRDYYASRSQGGSYGYRSSGGSYRDSYDSYATHNE).

Interacts with EIF4G1. Associates with ribosomes. Methylated on arginine residues. Methylation of the RGG motifs is a prerequisite for recruitment into SGs. Post-translationally, phosphorylated by CK2, GSK3A and GSK3B. Phosphorylation by GSK3B increases RNA-binding activity to the TXN 3'-UTR transcript upon exposure to UV radiation. As to expression, ubiquitous.

It is found in the nucleus. The protein localises to the nucleoplasm. Its subcellular location is the cytoplasm. Its function is as follows. Cold-inducible mRNA binding protein that plays a protective role in the genotoxic stress response by stabilizing transcripts of genes involved in cell survival. Promotes assembly of stress granules (SGs), when overexpressed. Seems to play an essential role in cold-induced suppression of cell proliferation. Acts as a translational repressor. Acts as a translational activator. Binds specifically to the 3'-untranslated regions (3'-UTRs) of stress-responsive transcripts RPA2 and TXN. The sequence is that of Cold-inducible RNA-binding protein (Cirbp) from Mus musculus (Mouse).